A 382-amino-acid polypeptide reads, in one-letter code: 1-deoxy-D-xylulose 5-phosphate reductoisomerase (382 aa).

NADPH is bound by residues T10, G11, S12, I13, G36, K37, N38, and N121. K122 provides a ligand contact to 1-deoxy-D-xylulose 5-phosphate. NADPH is bound at residue E123. D147 serves as a coordination point for Mn(2+). Residues S148, E149, S173, and H196 each coordinate 1-deoxy-D-xylulose 5-phosphate. E149 lines the Mn(2+) pocket. An NADPH-binding site is contributed by G202. S209, N214, K215, and E218 together coordinate 1-deoxy-D-xylulose 5-phosphate. E218 is a Mn(2+) binding site.

This sequence belongs to the DXR family. The cofactor is Mg(2+). Mn(2+) is required as a cofactor.

The catalysed reaction is 2-C-methyl-D-erythritol 4-phosphate + NADP(+) = 1-deoxy-D-xylulose 5-phosphate + NADPH + H(+). The protein operates within isoprenoid biosynthesis; isopentenyl diphosphate biosynthesis via DXP pathway; isopentenyl diphosphate from 1-deoxy-D-xylulose 5-phosphate: step 1/6. In terms of biological role, catalyzes the NADPH-dependent rearrangement and reduction of 1-deoxy-D-xylulose-5-phosphate (DXP) to 2-C-methyl-D-erythritol 4-phosphate (MEP). The sequence is that of 1-deoxy-D-xylulose 5-phosphate reductoisomerase from Halalkalibacterium halodurans (strain ATCC BAA-125 / DSM 18197 / FERM 7344 / JCM 9153 / C-125) (Bacillus halodurans).